A 629-amino-acid polypeptide reads, in one-letter code: tRNA uridine 5-carboxymethylaminomethyl modification enzyme MnmG (629 aa).

13-18 is an FAD binding site; the sequence is GGGHAG. Residue 273–287 coordinates NAD(+); that stretch reads GPRYCPSIEDKVNRF.

It belongs to the MnmG family. In terms of assembly, homodimer. Heterotetramer of two MnmE and two MnmG subunits. The cofactor is FAD.

The protein resides in the cytoplasm. NAD-binding protein involved in the addition of a carboxymethylaminomethyl (cmnm) group at the wobble position (U34) of certain tRNAs, forming tRNA-cmnm(5)s(2)U34. The protein is tRNA uridine 5-carboxymethylaminomethyl modification enzyme MnmG of Shewanella pealeana (strain ATCC 700345 / ANG-SQ1).